We begin with the raw amino-acid sequence, 52 residues long: MVAYWRQAGLSYIRFSQICAKAVRDALKTEFKANAEKTSGSSIKIVKVSKKE.

N6-acetyllysine; alternate is present on residues Lys21, Lys32, and Lys37. An N6-succinyllysine; alternate mark is found at Lys21, Lys32, and Lys37. Position 44 is an N6-acetyllysine (Lys44).

It belongs to the eukaryotic ATPase epsilon family. As to quaternary structure, component of the ATP synthase complex composed at least of ATP5F1A/subunit alpha, ATP5F1B/subunit beta, ATP5MC1/subunit c (homooctomer), MT-ATP6/subunit a, MT-ATP8/subunit 8, ATP5ME/subunit e, ATP5MF/subunit f, ATP5MG/subunit g, ATP5MK/subunit k, ATP5MJ/subunit j, ATP5F1C/subunit gamma, ATP5F1D/subunit delta, ATP5F1E/subunit epsilon, ATP5PF/subunit F6, ATP5PB/subunit b, ATP5PD/subunit d, ATP5PO/subunit OSCP. ATP synthase complex consists of a soluble F(1) head domain (subunits alpha(3) and beta(3)) - the catalytic core - and a membrane F(0) domain - the membrane proton channel (subunits c, a, 8, e, f, g, k and j). These two domains are linked by a central stalk (subunits gamma, delta, and epsilon) rotating inside the F1 region and a stationary peripheral stalk (subunits F6, b, d, and OSCP).

It is found in the mitochondrion. The protein localises to the mitochondrion inner membrane. In terms of biological role, subunit epsilon, of the mitochondrial membrane ATP synthase complex (F(1)F(0) ATP synthase or Complex V) that produces ATP from ADP in the presence of a proton gradient across the membrane which is generated by electron transport complexes of the respiratory chain. ATP synthase complex consist of a soluble F(1) head domain - the catalytic core - and a membrane F(1) domain - the membrane proton channel. These two domains are linked by a central stalk rotating inside the F(1) region and a stationary peripheral stalk. During catalysis, ATP synthesis in the catalytic domain of F(1) is coupled via a rotary mechanism of the central stalk subunits to proton translocation. In vivo, can only synthesize ATP although its ATP hydrolase activity can be activated artificially in vitro. May be essential for the assembly of F(1) and may play an important role in the incorporation of the hydrophobic subunit c into the F(1)-c oligomer rotor of the mitochondrial ATP synthase complex. This chain is ATP synthase F(1) complex subunit epsilon, mitochondrial, found in Mus musculus (Mouse).